The sequence spans 243 residues: Cell division protein ZipA (243 aa).

The Periplasmic portion of the chain corresponds to 1 to 4; that stretch reads MSDV. Residues 5-25 traverse the membrane as a helical segment; that stretch reads TLLRIGIAIVGILFVAAVFFF. At 26–243 the chain is on the cytoplasmic side; the sequence is STPKTSAHRV…VPPLIKNSRW (218 aa). The tract at residues 32–89 is disordered; sequence AHRVRTKKEEPPRERREPMLSTEADNSPPQGVDEVPASVSQQQVNPEANKPGEVQLGK. Basic and acidic residues predominate over residues 38–49; sequence KKEEPPRERREP.

This sequence belongs to the ZipA family. In terms of assembly, interacts with FtsZ via their C-terminal domains.

Its subcellular location is the cell inner membrane. Essential cell division protein that stabilizes the FtsZ protofilaments by cross-linking them and that serves as a cytoplasmic membrane anchor for the Z ring. Also required for the recruitment to the septal ring of downstream cell division proteins. The sequence is that of Cell division protein ZipA from Xylella fastidiosa (strain 9a5c).